The following is a 251-amino-acid chain: 1-(5-phosphoribosyl)-5-[(5-phosphoribosylamino)methylideneamino] imidazole-4-carboxamide isomerase (251 aa).

Aspartate 8 serves as the catalytic Proton acceptor. Aspartate 131 (proton donor) is an active-site residue.

Belongs to the HisA/HisF family.

It is found in the cytoplasm. It carries out the reaction 1-(5-phospho-beta-D-ribosyl)-5-[(5-phospho-beta-D-ribosylamino)methylideneamino]imidazole-4-carboxamide = 5-[(5-phospho-1-deoxy-D-ribulos-1-ylimino)methylamino]-1-(5-phospho-beta-D-ribosyl)imidazole-4-carboxamide. Its pathway is amino-acid biosynthesis; L-histidine biosynthesis; L-histidine from 5-phospho-alpha-D-ribose 1-diphosphate: step 4/9. This is 1-(5-phosphoribosyl)-5-[(5-phosphoribosylamino)methylideneamino] imidazole-4-carboxamide isomerase from Burkholderia ambifaria (strain MC40-6).